A 204-amino-acid polypeptide reads, in one-letter code: uncharacterized protein (204 aa).

Disordered regions lie at residues 1-37 and 159-204; these read MRALPGAGTVCDTAGVTERSRENRHPTGRGPRAGSVS and GYRP…DGEL. Over residues 28 to 37 the composition is skewed to low complexity; that stretch reads GRGPRAGSVS. Residues 88 to 175 form the WGR domain; the sequence is PYRLYVERLD…LPKEKWPAEA (88 aa). Composition is skewed to basic and acidic residues over residues 166-179 and 188-204; these read LPKEKWPAEAEHES and PEGHLDLDEERNLDGEL.

This is an uncharacterized protein from Sinorhizobium fredii (strain NBRC 101917 / NGR234).